The primary structure comprises 657 residues: Penicillin-binding protein activator LpoA (657 aa).

An N-terminal signal peptide occupies residues 1-25 (MLSSTFVRSKAGLVPVILAALILAA). Residue cysteine 26 is the site of N-palmitoyl cysteine attachment. Cysteine 26 carries the S-diacylglycerol cysteine lipid modification.

This sequence belongs to the LpoA family. Interacts with PBP1a.

The protein localises to the cell outer membrane. Regulator of peptidoglycan synthesis that is essential for the function of penicillin-binding protein 1A (PBP1a). This is Penicillin-binding protein activator LpoA from Yersinia pseudotuberculosis serotype O:1b (strain IP 31758).